Here is a 326-residue protein sequence, read N- to C-terminus: MPLTSDVKEELSRVEVSKTTVRAAELATILRFSGGLHLISNRIAVESELDTPLLARRVRKDLAELYGVRSDISVIPASGMRRATHYLVRVMEGGETLARQTGLLDARRRPIRGLPNRLTTGSREEIAAVWRGAFLAAGTLTDPGRSAALEVTCPGNEAAMALVGAAGRLDVSAKAREVRGVHRVVIRDGDAIGQMLRVMGAQGTVVNWEEMRQRREVRATANRLVNFDDANLRRSAQAAVAACARVERAMEILGPDIPEHLKYAGDLRLRFRDSSLDELGHHADPPMTKDAVAGRIRRLLAMADKKAVDEGLPGTDANLPADLDDV.

A DNA-binding region (H-T-H motif) is located at residues 275–308 (SLDELGHHADPPMTKDAVAGRIRRLLAMADKKAV).

Belongs to the WhiA family.

In terms of biological role, involved in cell division and chromosome segregation. The protein is Probable cell division protein WhiA of Clavibacter michiganensis subsp. michiganensis (strain NCPPB 382).